Here is a 334-residue protein sequence, read N- to C-terminus: N,N'-diacetyllegionaminic acid synthase (334 aa).

The 53-residue stretch at 282–334 folds into the AFP-like domain; sequence SLVAKKDIKKGEIFSEGNLTTKRPANGISAMRYEEFLGKIATKNYKEDELIRE.

It catalyses the reaction 2,4-diacetamido-2,4,6-trideoxy-alpha-D-mannopyranose + phosphoenolpyruvate + H2O = N,N-diacetyllegionaminate + phosphate. Its function is as follows. Involved in biosynthesis of legionaminic acid (5,7-diamino-3,5,7,9-tetradeoxy-D-glycero-D-galacto-non-2-ulosonic acid)(Leg), a sialic acid-like derivative that is incorporated into flagellin via O-linkage to Ser/Thr. Catalyzes the condensation of 2,4-diacetamido-2,4,6-trideoxymannose with phosphoenolpyruvate (PEP) to give N,N'-diacetyllegionaminic acid. In Campylobacter jejuni subsp. jejuni serotype O:2 (strain ATCC 700819 / NCTC 11168), this protein is N,N'-diacetyllegionaminic acid synthase (legI).